A 648-amino-acid chain; its full sequence is Biosynthetic arginine decarboxylase (648 aa).

Lysine 109 is modified (N6-(pyridoxal phosphate)lysine). 291-301 (IDVGGGLGIDF) contacts substrate.

The protein belongs to the Orn/Lys/Arg decarboxylase class-II family. SpeA subfamily. Mg(2+) is required as a cofactor. Pyridoxal 5'-phosphate serves as cofactor.

The enzyme catalyses L-arginine + H(+) = agmatine + CO2. It participates in amine and polyamine biosynthesis; agmatine biosynthesis; agmatine from L-arginine: step 1/1. In terms of biological role, catalyzes the biosynthesis of agmatine from arginine. The chain is Biosynthetic arginine decarboxylase from Prochlorococcus marinus (strain MIT 9301).